Reading from the N-terminus, the 723-residue chain is Tryptophan 2-monooxygenase (723 aa).

Residues Ser218, Glu238, Arg246, and Arg266 each contribute to the FMN site. Arg266 serves as a coordination point for substrate.

It belongs to the tryptophan 2-monooxygenase family. The cofactor is FMN.

The catalysed reaction is L-tryptophan + O2 = indole-3-acetamide + CO2 + H2O. The protein operates within plant hormone metabolism; auxin biosynthesis. The polypeptide is Tryptophan 2-monooxygenase (iaaM) (Allorhizobium ampelinum (strain ATCC BAA-846 / DSM 112012 / S4) (Agrobacterium vitis (strain S4))).